The chain runs to 272 residues: NAD kinase (272 aa).

The active-site Proton acceptor is D50. Residues 50–51 (DG), 126–127 (NE), R152, D154, 165–170 (TAYNKS), and A189 contribute to the NAD(+) site.

The protein belongs to the NAD kinase family. It depends on a divalent metal cation as a cofactor.

Its subcellular location is the cytoplasm. The catalysed reaction is NAD(+) + ATP = ADP + NADP(+) + H(+). In terms of biological role, involved in the regulation of the intracellular balance of NAD and NADP, and is a key enzyme in the biosynthesis of NADP. Catalyzes specifically the phosphorylation on 2'-hydroxyl of the adenosine moiety of NAD to yield NADP. The polypeptide is NAD kinase (Streptococcus pneumoniae (strain Hungary19A-6)).